We begin with the raw amino-acid sequence, 131 residues long: Histone H2A.1 (131 aa).

Serine 2 carries the N-acetylserine modification. Residues lysine 5 and lysine 8 each carry the N6-acetyllysine modification. Position 106 is an N5-methylglutamine (glutamine 106). At serine 128 the chain carries Phosphoserine. A [ST]-Q motif motif is present at residues 128-129 (SQ).

It belongs to the histone H2A family. In terms of assembly, the nucleosome is a histone octamer containing two molecules each of H2A, H2B, H3 and H4 assembled in one H3-H4 heterotetramer and two H2A-H2B heterodimers. The octamer wraps approximately 147 bp of DNA. Post-translationally, phosphorylated to form H2AS128ph (gamma-H2A) in response to DNA double-strand breaks (DSBs) generated by exogenous genotoxic agents and by stalled replication forks. Phosphorylation is dependent on the DNA damage checkpoint kinases MEC1/ATR and TEL1/ATM, spreads on either side of a detected DSB site and may mark the surrounding chromatin for recruitment of proteins required for DNA damage signaling and repair. Gamma-H2A is removed from the DNA prior to the strand invasion-primer extension step of the repair process and subsequently dephosphorylated by PPH3, a component of the histone H2A phosphatase complex (HTP-C). Dephosphorylation is necessary for efficient recovery from the DNA damage checkpoint. Acetylated by ESA1 to form H2AK4ac and H2AK7ac.

Its subcellular location is the nucleus. It is found in the chromosome. Its function is as follows. Core component of nucleosome which plays a central role in DNA double strand break (DSB) repair. Nucleosomes wrap and compact DNA into chromatin, limiting DNA accessibility to the cellular machineries which require DNA as a template. Histones thereby play a central role in transcription regulation, DNA repair, DNA replication and chromosomal stability. DNA accessibility is regulated via a complex set of post-translational modifications of histones, also called histone code, and nucleosome remodeling. The sequence is that of Histone H2A.1 (HTA1) from Candida glabrata (strain ATCC 2001 / BCRC 20586 / JCM 3761 / NBRC 0622 / NRRL Y-65 / CBS 138) (Yeast).